A 284-amino-acid polypeptide reads, in one-letter code: Bifunctional protein FolD (284 aa).

NADP(+)-binding positions include 166–168 and isoleucine 232; that span reads GAS.

The protein belongs to the tetrahydrofolate dehydrogenase/cyclohydrolase family. Homodimer.

It carries out the reaction (6R)-5,10-methylene-5,6,7,8-tetrahydrofolate + NADP(+) = (6R)-5,10-methenyltetrahydrofolate + NADPH. The enzyme catalyses (6R)-5,10-methenyltetrahydrofolate + H2O = (6R)-10-formyltetrahydrofolate + H(+). It participates in one-carbon metabolism; tetrahydrofolate interconversion. Functionally, catalyzes the oxidation of 5,10-methylenetetrahydrofolate to 5,10-methenyltetrahydrofolate and then the hydrolysis of 5,10-methenyltetrahydrofolate to 10-formyltetrahydrofolate. This is Bifunctional protein FolD from Shewanella pealeana (strain ATCC 700345 / ANG-SQ1).